Consider the following 138-residue polypeptide: MLKEFKQFALKGNMVDLAVGVIIGSAFGGLVNSVVNDIFMPIIGLITGGIDFSNMFIQLAGDKKATLLAAKEAGATLSYGNFITLLINFLIISWILFFLVKGMNKMTQKQEEVEKPKEMSPEGKLLTEIRDLLAAQKE.

3 helical membrane-spanning segments follow: residues 15 to 35 (VDLAVGVIIGSAFGGLVNSVV), 38 to 58 (IFMPIIGLITGGIDFSNMFIQ), and 80 to 100 (GNFITLLINFLIISWILFFLV).

It belongs to the MscL family. Homopentamer.

The protein resides in the cell inner membrane. Its function is as follows. Channel that opens in response to stretch forces in the membrane lipid bilayer. May participate in the regulation of osmotic pressure changes within the cell. The sequence is that of Large-conductance mechanosensitive channel from Bartonella bacilliformis (strain ATCC 35685 / KC583 / Herrer 020/F12,63).